Consider the following 164-residue polypeptide: S-ribosylhomocysteine lyase (164 aa).

Fe cation-binding residues include H61, H65, and C131.

The protein belongs to the LuxS family. Homodimer. The cofactor is Fe cation.

The catalysed reaction is S-(5-deoxy-D-ribos-5-yl)-L-homocysteine = (S)-4,5-dihydroxypentane-2,3-dione + L-homocysteine. In terms of biological role, involved in the synthesis of autoinducer 2 (AI-2) which is secreted by bacteria and is used to communicate both the cell density and the metabolic potential of the environment. The regulation of gene expression in response to changes in cell density is called quorum sensing. Catalyzes the transformation of S-ribosylhomocysteine (RHC) to homocysteine (HC) and 4,5-dihydroxy-2,3-pentadione (DPD). This chain is S-ribosylhomocysteine lyase, found in Bifidobacterium longum subsp. infantis (strain ATCC 15697 / DSM 20088 / JCM 1222 / NCTC 11817 / S12).